The sequence spans 174 residues: Peptide deformylase (174 aa).

2 residues coordinate Fe cation: C96 and H138. Residue E139 is part of the active site. H142 is a binding site for Fe cation.

Belongs to the polypeptide deformylase family. Fe(2+) is required as a cofactor.

The enzyme catalyses N-terminal N-formyl-L-methionyl-[peptide] + H2O = N-terminal L-methionyl-[peptide] + formate. Functionally, removes the formyl group from the N-terminal Met of newly synthesized proteins. Requires at least a dipeptide for an efficient rate of reaction. N-terminal L-methionine is a prerequisite for activity but the enzyme has broad specificity at other positions. The polypeptide is Peptide deformylase (Nautilia profundicola (strain ATCC BAA-1463 / DSM 18972 / AmH)).